We begin with the raw amino-acid sequence, 1401 residues long: Protein dispatched homolog 2 (1401 aa).

Disordered stretches follow at residues 1–91 and 113–138; these read MDGD…LAPA and DRAALCSHGSSLSPSPAPSQRDGTWK. A helical membrane pass occupies residues 170–190; that stretch reads VAVLMLCLAVIFLCTLAGLLG. An N-linked (GlcNAc...) asparagine glycan is attached at asparagine 239. A disordered region spans residues 241–264; the sequence is SSSHNTLRPAPRGSAQESAVRPRR. N-linked (GlcNAc...) asparagine glycosylation is found at asparagine 349 and asparagine 465. Positions 471 to 643 constitute an SSD domain; the sequence is GMDLGLKQEL…LVWLPASAVL (173 aa). A run of 11 helical transmembrane segments spans residues 484 to 504, 510 to 530, 542 to 562, 589 to 609, 617 to 637, 704 to 724, 964 to 984, 990 to 1010, 1019 to 1039, 1064 to 1084, and 1088 to 1108; these read FLVQDTVYPLLALVAIFFGMA, LFLTLMVLLGVLGSLLVAFFL, FVNLAALLLLSSVCANHTLIF, FGYLLLVSGLTTSAAFYASYL, CLALFMGTAVLVHLALTLVWL, YIWICWFAALAAGGAYIAGVS, PAVVLGLALALAFATLLLGTW, LFSVAAVAGTVLLTVGLLVLL, ALFLSASVGLSVDFTVNYCIS, AVGAAALFAAGVLMLPATVLL, and LGIILMMVKCVSCGFASFFFQ. 3 disordered regions span residues 1169 to 1192, 1229 to 1337, and 1352 to 1401; these read ARRRSPSFDTSTATSKLSHRPSVL, PALQ…NGKR, and SLPA…GYSS. Over residues 1175–1184 the composition is skewed to polar residues; that stretch reads SFDTSTATSK. A compositionally biased stretch (low complexity) spans 1259–1270; sequence PLPASPEAPAHS. Over residues 1284–1305 the composition is skewed to polar residues; that stretch reads SSASTLEGLSVSDETCLSTSEP. Low complexity predominate over residues 1352–1362; it reads SLPASHHSSLS. Position 1366 is an omega-N-methylarginine (arginine 1366).

This sequence belongs to the dispatched family.

The protein localises to the membrane. This Homo sapiens (Human) protein is Protein dispatched homolog 2.